Consider the following 475-residue polypeptide: Zinc-regulated GTPase metalloprotein activator 1 (475 aa).

A GTP-binding site is contributed by 50 to 57 (GFLGSGKT). Residues Cys-116, Cys-118, and Cys-119 each contribute to the Zn(2+) site. Residues 116-119 (CICC) carry the CXCC motif motif. GTP contacts are provided by residues 119 to 123 (CTMRE) and 229 to 232 (NKCD). The 119-residue stretch at 302–420 (IKSFIYKARR…LIESELNNCL (119 aa)) folds into the CobW C-terminal domain. Residues 440 to 467 (IQLDEELEEEELEEEEEEGEYKDEIEMK) are a coiled coil. Positions 445–460 (ELEEEELEEEEEEGEY) are enriched in acidic residues. The disordered stretch occupies residues 445–475 (ELEEEELEEEEEEGEYKDEIEMKVDGSKFKK). The span at 461–475 (KDEIEMKVDGSKFKK) shows a compositional bias: basic and acidic residues.

The protein belongs to the SIMIBI class G3E GTPase family. ZNG1 subfamily.

It carries out the reaction GTP + H2O = GDP + phosphate + H(+). In terms of biological role, zinc chaperone that directly transfers zinc cofactor to target metalloproteins, thereby activating them. Zinc is transferred from the CXCC motif in the GTPase domain to the zinc binding site in target proteins in a process requiring GTP hydrolysis. This Dictyostelium discoideum (Social amoeba) protein is Zinc-regulated GTPase metalloprotein activator 1.